Reading from the N-terminus, the 340-residue chain is Glycerol-3-phosphate dehydrogenase [NAD(P)+] (340 aa).

Positions 13, 14, and 108 each coordinate NADPH. 3 residues coordinate sn-glycerol 3-phosphate: Lys-108, Gly-139, and Ser-141. Residue Ala-143 coordinates NADPH. The sn-glycerol 3-phosphate site is built by Lys-194, Asp-247, Ser-257, Arg-258, and Asn-259. Lys-194 (proton acceptor) is an active-site residue. Arg-258 lines the NADPH pocket. Val-282 and Glu-284 together coordinate NADPH.

The protein belongs to the NAD-dependent glycerol-3-phosphate dehydrogenase family.

Its subcellular location is the cytoplasm. The catalysed reaction is sn-glycerol 3-phosphate + NAD(+) = dihydroxyacetone phosphate + NADH + H(+). It carries out the reaction sn-glycerol 3-phosphate + NADP(+) = dihydroxyacetone phosphate + NADPH + H(+). The protein operates within membrane lipid metabolism; glycerophospholipid metabolism. In terms of biological role, catalyzes the reduction of the glycolytic intermediate dihydroxyacetone phosphate (DHAP) to sn-glycerol 3-phosphate (G3P), the key precursor for phospholipid synthesis. This Streptococcus sanguinis (strain SK36) protein is Glycerol-3-phosphate dehydrogenase [NAD(P)+].